We begin with the raw amino-acid sequence, 545 residues long: MASHTKDALLSRRYIEGQIAAGKHIIIFDDRVLKVDSWIKFHPGGDKSIKHMVGQDATDEINALHSVEARQRMLAFQIGRIQGPWVNFLPPIQGGKFRHYDENADSEEDDTSGQSQPPSPIFDAVDAAPGVRRQYASSETSVSTPASESSEPKPFFLDARTREEIVLDTAKYPSLDAKTQQDIKRRYRELNKRIEAEGLYDCNYFSYFIEACRYTLFAGLSYFFLRLGWYSVSAVFLGCFWHQLVFSAHDAGHIAITHNYQVDSIIGILIADFLGGLSLGWWKRSHNVHHIVTNEPEHDPDIEHMPFFAISHRFFMNLRSTYYDRVMYFDAFSNFMLKYQHYLYYPILLFGRFNLYRLSWEYLILGQGPRKGPAWWHRWFEIAGQIFFWIWFGYGVLYCSIPTWGSRLSFLFISHMVTAPVHVQITLSHFAMSTADLGVQESFPQKMLRTTMDVDCPTWLDFFHGGLQFQAIHHLYPRIPRHNLRRTQKLVLEFCRDTGIPYALFTFTDGNKEVIGRLGDIAKQVRILEECRKSCAQQGVFSNHH.

A Cytochrome b5 heme-binding domain is found at 1 to 82 (MASHTKDALL…MLAFQIGRIQ (82 aa)). 2 residues coordinate heme: His-42 and His-65. The disordered stretch occupies residues 97 to 124 (FRHYDENADSEEDDTSGQSQPPSPIFDA). The helical transmembrane segment at 227–247 (LGWYSVSAVFLGCFWHQLVFS) threads the bilayer. Residues 249-253 (HDAGH) carry the Histidine box-1 motif. Residues 262–282 (VDSIIGILIADFLGGLSLGWW) form a helical membrane-spanning segment. Residues 286-290 (HNVHH) carry the Histidine box-2 motif. Transmembrane regions (helical) follow at residues 382-402 (IAGQ…CSIP) and 408-428 (LSFL…ITLS). Positions 470-474 (QAIHH) match the Histidine box-3 motif.

The protein belongs to the fatty acid desaturase type 1 family.

The protein localises to the membrane. It carries out the reaction an N-acylsphing-4-enine + 2 Fe(II)-[cytochrome b5] + O2 + 2 H(+) = a (4E,8E)-4-sphinga-4,8-dienine ceramide + 2 Fe(III)-[cytochrome b5] + 2 H2O. The protein operates within lipid metabolism; sphingolipid metabolism. Its function is as follows. Delta(8)-fatty-acid desaturase which introduces a double bond at the 8-position in the long-chain base (LCB) of ceramides. Required for the formation of the di-unsaturated sphingoid base (E,E)-sphinga-4,8-dienine during glucosylceramide (GluCer) biosynthesis. Plays an important role in conidiation. The chain is Delta 8-(E)-sphingolipid desaturase from Emericella nidulans (strain FGSC A4 / ATCC 38163 / CBS 112.46 / NRRL 194 / M139) (Aspergillus nidulans).